Consider the following 282-residue polypeptide: Small ribosomal subunit protein uS3 (282 aa).

A KH type-2 domain is found at 43-111; sequence IRQLMSTGME…QVQLNILEVK (69 aa). Residues 218-282 form a disordered region; that stretch reads QQAASAPSRG…AAVATEGSDA (65 aa). Basic and acidic residues predominate over residues 230–262; that stretch reads PRRDGDDRGPRRENSGPRRDGGNLRSQRNDRNE. The span at 263–276 shows a compositional bias: low complexity; it reads NAAVEAAPAAAAVA.

Belongs to the universal ribosomal protein uS3 family. In terms of assembly, part of the 30S ribosomal subunit. Forms a tight complex with proteins S10 and S14.

Functionally, binds the lower part of the 30S subunit head. Binds mRNA in the 70S ribosome, positioning it for translation. The protein is Small ribosomal subunit protein uS3 of Renibacterium salmoninarum (strain ATCC 33209 / DSM 20767 / JCM 11484 / NBRC 15589 / NCIMB 2235).